Reading from the N-terminus, the 157-residue chain is Small ribosomal subunit protein uS7 (157 aa).

It belongs to the universal ribosomal protein uS7 family. Part of the 30S ribosomal subunit. Contacts proteins S9 and S11.

Functionally, one of the primary rRNA binding proteins, it binds directly to 16S rRNA where it nucleates assembly of the head domain of the 30S subunit. Is located at the subunit interface close to the decoding center, probably blocks exit of the E-site tRNA. The chain is Small ribosomal subunit protein uS7 from Paracidovorax citrulli (strain AAC00-1) (Acidovorax citrulli).